A 106-amino-acid chain; its full sequence is 3-phenylpropionate/cinnamic acid dioxygenase ferredoxin subunit (106 aa).

The Rieske domain occupies 4–99 (IYACPVADVP…VHVEGSDIFI (96 aa)). 4 residues coordinate [2Fe-2S] cluster: Cys42, His44, Cys62, and His65.

This sequence belongs to the bacterial ring-hydroxylating dioxygenase ferredoxin component family. This dioxygenase system consists of four proteins: the two subunits of the hydroxylase component (HcaE and HcaF), a ferredoxin (HcaC) and a ferredoxin reductase (HcaD). It depends on [2Fe-2S] cluster as a cofactor.

It participates in aromatic compound metabolism; 3-phenylpropanoate degradation. Its function is as follows. Part of the multicomponent 3-phenylpropionate dioxygenase, that converts 3-phenylpropionic acid (PP) and cinnamic acid (CI) into 3-phenylpropionate-dihydrodiol (PP-dihydrodiol) and cinnamic acid-dihydrodiol (CI-dihydrodiol), respectively. This protein seems to be a 2Fe-2S ferredoxin. The polypeptide is 3-phenylpropionate/cinnamic acid dioxygenase ferredoxin subunit (Shigella boydii serotype 4 (strain Sb227)).